The sequence spans 377 residues: Alkane 1-monooxygenase 2 (377 aa).

Transmembrane regions (helical) follow at residues 17–37 (GYWI…WSLG), 43–63 (AWPW…DAIV), 87–107 (VLSL…GWIL), and 116–136 (VGQL…GITV). His138, His142, His168, His172, and His173 together coordinate Fe cation. A helical membrane pass occupies residues 236-256 (ALFLLGFSLAFGWLGAIFFLG). Residues His312, His315, and His316 each coordinate Fe cation.

The protein belongs to the fatty acid desaturase type 1 family. AlkB subfamily. Fe(3+) serves as cofactor.

Its subcellular location is the cell inner membrane. It catalyses the reaction octane + 2 reduced [rubredoxin] + O2 + 2 H(+) = 2 oxidized [rubredoxin] + octan-1-ol + H2O. It participates in hydrocarbon metabolism; alkane degradation. Its function is as follows. Catalyzes the hydroxylation of n-alkanes in the presence of a NADH-rubredoxin reductase and rubredoxin. It preferably hydroxylases C12-C20 hydrocarbons. This Pseudomonas aeruginosa (strain ATCC 15692 / DSM 22644 / CIP 104116 / JCM 14847 / LMG 12228 / 1C / PRS 101 / PAO1) protein is Alkane 1-monooxygenase 2 (alkB2).